The following is a 273-amino-acid chain: Probable ribosomal RNA small subunit methyltransferase A (273 aa).

Positions 26, 28, 53, 74, 98, and 113 each coordinate S-adenosyl-L-methionine.

It belongs to the class I-like SAM-binding methyltransferase superfamily. rRNA adenine N(6)-methyltransferase family. RsmA subfamily.

It localises to the cytoplasm. Specifically dimethylates two adjacent adenosines in the loop of a conserved hairpin near the 3'-end of 16S rRNA in the 30S particle. May play a critical role in biogenesis of 30S subunits. In Methanothermobacter thermautotrophicus (strain ATCC 29096 / DSM 1053 / JCM 10044 / NBRC 100330 / Delta H) (Methanobacterium thermoautotrophicum), this protein is Probable ribosomal RNA small subunit methyltransferase A.